The primary structure comprises 157 residues: Protein Smg homolog (157 aa).

Belongs to the Smg family.

This Stenotrophomonas maltophilia (strain R551-3) protein is Protein Smg homolog.